A 94-amino-acid chain; its full sequence is Co-chaperonin GroES (94 aa).

It belongs to the GroES chaperonin family. As to quaternary structure, heptamer of 7 subunits arranged in a ring. Interacts with the chaperonin GroEL.

The protein resides in the cytoplasm. Functionally, together with the chaperonin GroEL, plays an essential role in assisting protein folding. The GroEL-GroES system forms a nano-cage that allows encapsulation of the non-native substrate proteins and provides a physical environment optimized to promote and accelerate protein folding. GroES binds to the apical surface of the GroEL ring, thereby capping the opening of the GroEL channel. The chain is Co-chaperonin GroES from Bacillus cereus (strain ATCC 14579 / DSM 31 / CCUG 7414 / JCM 2152 / NBRC 15305 / NCIMB 9373 / NCTC 2599 / NRRL B-3711).